The chain runs to 209 residues: Thiamine-phosphate synthase (209 aa).

Residues 38-42 (QYRDK) and N70 contribute to the 4-amino-2-methyl-5-(diphosphooxymethyl)pyrimidine site. Mg(2+)-binding residues include D71 and D89. A 4-amino-2-methyl-5-(diphosphooxymethyl)pyrimidine-binding site is contributed by T108. 135-137 (SNT) is a 2-[(2R,5Z)-2-carboxy-4-methylthiazol-5(2H)-ylidene]ethyl phosphate binding site. K138 serves as a coordination point for 4-amino-2-methyl-5-(diphosphooxymethyl)pyrimidine. G165 lines the 2-[(2R,5Z)-2-carboxy-4-methylthiazol-5(2H)-ylidene]ethyl phosphate pocket.

The protein belongs to the thiamine-phosphate synthase family. Mg(2+) serves as cofactor.

It catalyses the reaction 2-[(2R,5Z)-2-carboxy-4-methylthiazol-5(2H)-ylidene]ethyl phosphate + 4-amino-2-methyl-5-(diphosphooxymethyl)pyrimidine + 2 H(+) = thiamine phosphate + CO2 + diphosphate. The enzyme catalyses 2-(2-carboxy-4-methylthiazol-5-yl)ethyl phosphate + 4-amino-2-methyl-5-(diphosphooxymethyl)pyrimidine + 2 H(+) = thiamine phosphate + CO2 + diphosphate. It carries out the reaction 4-methyl-5-(2-phosphooxyethyl)-thiazole + 4-amino-2-methyl-5-(diphosphooxymethyl)pyrimidine + H(+) = thiamine phosphate + diphosphate. It participates in cofactor biosynthesis; thiamine diphosphate biosynthesis; thiamine phosphate from 4-amino-2-methyl-5-diphosphomethylpyrimidine and 4-methyl-5-(2-phosphoethyl)-thiazole: step 1/1. Functionally, condenses 4-methyl-5-(beta-hydroxyethyl)thiazole monophosphate (THZ-P) and 2-methyl-4-amino-5-hydroxymethyl pyrimidine pyrophosphate (HMP-PP) to form thiamine monophosphate (TMP). This is Thiamine-phosphate synthase from Ectopseudomonas mendocina (strain ymp) (Pseudomonas mendocina).